The following is a 456-amino-acid chain: Phosphomannomutase (456 aa).

The Phosphoserine intermediate role is filled by S98. Mg(2+) contacts are provided by S98, D246, D248, and D250.

This sequence belongs to the phosphohexose mutase family. It depends on Mg(2+) as a cofactor.

It catalyses the reaction alpha-D-mannose 1-phosphate = D-mannose 6-phosphate. It functions in the pathway nucleotide-sugar biosynthesis; GDP-alpha-D-mannose biosynthesis; alpha-D-mannose 1-phosphate from D-fructose 6-phosphate: step 2/2. It participates in bacterial outer membrane biogenesis; LPS O-antigen biosynthesis. Functionally, involved in GDP-mannose biosynthesis which serves as the activated sugar nucleotide precursor for mannose residues in cell surface polysaccharides. This enzyme participates in synthesis of the LPS O9 antigen. The chain is Phosphomannomutase (manB) from Escherichia coli.